The chain runs to 427 residues: Thyroid hormone receptor alpha-A (427 aa).

Residues 1–11 (MENTEQEHNLP) show a composition bias toward basic and acidic residues. A disordered region spans residues 1–40 (MENTEQEHNLPEGDETQWPNGVKRKRKNSQCSMNSTSDKS). A modulating region spans residues 1-56 (MENTEQEHNLPEGDETQWPNGVKRKRKNSQCSMNSTSDKSISVPGYVPSYLEKDEP). The segment covering 29 to 40 (SQCSMNSTSDKS) has biased composition (polar residues). 2 consecutive NR C4-type zinc fingers follow at residues 57-77 (CVVCGDKATGYHYRCITCEGC) and 95-119 (CKYDSCCIIDKITRNQCQLCRFRKC). Residues 57–131 (CVVCGDKATG…VGMAMDLVLD (75 aa)) constitute a DNA-binding region (nuclear receptor). The 244-residue stretch at 167-410 (SEWELIRMVT…PPLFLEVFED (244 aa)) folds into the NR LBD domain.

Belongs to the nuclear hormone receptor family. NR1 subfamily. Interacts with ncoa2. As to expression, after the mid-blastula transition (MBT), expressed throughout the deep cells, which give rise to the embryo proper. In adults, isoform 2 shows highest expression in the eye and liver. Expressed in adult gonads.

It is found in the nucleus. In terms of biological role, high affinity receptor for triiodothyronine. In the absence of thyroid hormone during late blastula stage development, acts as a transcriptional repressor. Whereas in the presence of thyroid hormone, can act as an activator of transcription. In addition, represses retinoic acid (RA)-signaling during blastula and gastrula stages of development. The polypeptide is Thyroid hormone receptor alpha-A (thraa) (Danio rerio (Zebrafish)).